The chain runs to 3095 residues: Centrosome-associated protein 350 (3095 aa).

Disordered regions lie at residues 1–24 (MRSS…ETIQ) and 63–105 (TKKS…RSPL). Positions 14–24 (PRNSQSKETIQ) are enriched in polar residues. 2 positions are modified to phosphoserine: Ser-84 and Ser-140. Disordered stretches follow at residues 219–239 (DEMP…LNNM), 251–272 (SDSS…KRQQ), and 430–493 (KILG…RAWS). Residues 228–238 (SENNSKPSLNN) are compositionally biased toward polar residues. Low complexity predominate over residues 251 to 265 (SDSSPSSSACNSQRS). Basic and acidic residues-rich tracts occupy residues 438–457 (MEQK…ERVA) and 464–476 (GRAE…DVSH). Ser-468 carries the post-translational modification Phosphoserine. Low complexity predominate over residues 481–491 (RSSARSRSSRA). The residue at position 503 (Ser-503) is a Phosphoserine. Disordered regions lie at residues 538 to 623 (QAVR…QKNK) and 671 to 718 (ARQH…PPQP). Composition is skewed to basic and acidic residues over residues 587-623 (YDTD…QKNK) and 690-699 (ESDKENKIQE). Residues 596–641 (IVRQQEERRRRQHEEKKAQKEATEQKNKRLQELYRRQREAFSKAKT) are a coiled coil. Ser-691 is modified (phosphoserine). The span at 701 to 714 (PPSASSSSDLSLSE) shows a compositional bias: low complexity. A phosphoserine mark is found at Ser-874 and Ser-935. The segment at 977–996 (SVSEGPLLSEGSLSEEEERR) is disordered. Positions 979–988 (SEGPLLSEGS) are enriched in low complexity. Ser-1057 bears the Phosphoserine mark. Disordered regions lie at residues 1099–1128 (YEDD…GSSL) and 1151–1265 (QHSS…SQKL). Positions 1119 to 1128 (LESQVDGSSL) are enriched in polar residues. Positions 1153-1168 (SSGARSAGSTRSSSAS) are enriched in low complexity. Over residues 1194–1206 (DEEKVQSDSERGS) the composition is skewed to basic and acidic residues. At Ser-1200 the chain carries Phosphoserine. A compositionally biased stretch (low complexity) spans 1251–1265 (QKTPTSPLSPSSQKL). Thr-1253 carries the post-translational modification Phosphothreonine. Phosphoserine occurs at positions 1256 and 1259. Residues 1363 to 1402 (IKAQQQRHERDLALLKLKAEQEALECQRQLEETRNKTAQV) are a coiled coil. Disordered regions lie at residues 1490–1668 (AETD…GQDS), 1720–1739 (LRDK…QRGL), 1787–1864 (KLKS…QRRQ), and 1893–2017 (AWDK…PVKS). Basic and acidic residues predominate over residues 1503 to 1513 (QSKEGAVDSKR). 2 stretches are compositionally biased toward low complexity: residues 1517–1526 (SPSRDSYSES) and 1536–1545 (SSGSSRQDSP). Over residues 1551–1564 (KENEKPFHGEKMES) the composition is skewed to basic and acidic residues. Residue Ser-1606 is modified to Phosphoserine. Residues 1624-1640 (ESHRRFNMEKKRGHHDD) are compositionally biased toward basic and acidic residues. Phosphoserine occurs at positions 1641 and 1646. A coiled-coil region spans residues 1700-1793 (KALKEKTKAE…LQEKLKSAGE (94 aa)). A compositionally biased stretch (basic and acidic residues) spans 1787 to 1796 (KLKSAGEKKL). Ser-1812 carries the post-translational modification Phosphoserine. Positions 1819 to 1835 (ETRSPSPISISSSETSS) are enriched in low complexity. 2 stretches are compositionally biased toward basic and acidic residues: residues 1845–1864 (SRMD…QRRQ) and 1894–1915 (WDKE…RTEQ). The stretch at 1850–1893 (KFLTKREQKLMQRRQHAEELLEWKRRLDAEEAEIQQMEKQALAA) forms a coiled coil. Ser-1930 bears the Phosphoserine mark. Residues 1980–1994 (STSPSKHSPPKSCLS) show a composition bias toward low complexity. Positions 1999 to 2011 (ESSKASHRTEGHC) are enriched in basic and acidic residues. Residues 2043–2092 (IEGRIRALKDELRKRKSVVEQLKREQRKRQKERLKAQEASLLRQLETYDE) are a coiled coil. Ser-2108 carries the phosphoserine modification. 4 disordered regions span residues 2116 to 2155 (KTLS…GSLA), 2191 to 2265 (IEHL…VEDA), 2286 to 2427 (LSSK…EISE), and 2440 to 2471 (VHSE…GGTE). Positions 2133–2151 (HRSETAKTWKSVTESERSR) are enriched in basic and acidic residues. At Ser-2198 the chain carries Phosphoserine. 2 stretches are compositionally biased toward basic and acidic residues: residues 2202–2214 (SSRK…RDSL) and 2227–2259 (NAPD…KLES). Residues 2286-2300 (LSSKELPSDSANVQQ) are compositionally biased toward polar residues. Residues 2301–2331 (DLDKPATETSHEKEEALKEDQSNHSTDDRSP) show a composition bias toward basic and acidic residues. Positions 2349 to 2362 (DSTCSGQLSVPKES) are enriched in polar residues. Composition is skewed to basic and acidic residues over residues 2377–2387 (ISADEISKDDS) and 2395–2407 (LRKD…DRSQ). The span at 2409 to 2420 (TRSSRSRATGSG) shows a compositional bias: low complexity. Ser-2421 and Ser-2450 each carry phosphoserine. The segment covering 2455–2465 (MKSKERSDVGH) has biased composition (basic and acidic residues). In terms of domain architecture, CAP-Gly spans 2504-2546 (GETDFAKGFWAGVELDKPEGNNNGTYDGIVYFVCKDKHGIFAP). Thr-2671 is modified (phosphothreonine). Residues 2700–2731 (LLDLLTREKNQLEAQLKSSISEEKKSKQQLET) adopt a coiled-coil conformation. The tract at residues 2767 to 2793 (QEFLDQKKVPPQDLPQNTEEQSPSVPS) is disordered. Polar residues predominate over residues 2780 to 2791 (LPQNTEEQSPSV). Phosphoserine occurs at positions 2809 and 2818.

Part of a ternary complex that contains CEP350, CEP43 and MAPRE1. Interacts (via C-terminus) directly with CEP43 (via N-terminus). Interacts with NR1H3, PPARA, PPARD and PPARG. Interacts directly with microtubules. Interacts with the fusion protein CEP43-FGFR1, and by doing so recruits and activates PI3K and PLC-gamma. Interacts with CYLD. Interacts with CFAP157. Interacts with CEP19 (via C-terminus). Interacts with CEP78; promoting CEP78 localization to centrosome and centriole. In terms of processing, phosphorylated during mitosis.

The protein localises to the cytoplasm. It is found in the cytoskeleton. Its subcellular location is the microtubule organizing center. The protein resides in the centrosome. It localises to the spindle. The protein localises to the nucleus. It is found in the centriole. Its subcellular location is the cilium basal body. Its function is as follows. Plays an essential role in centriole growth by stabilizing a procentriolar seed composed of at least, SASS6 and CPAP. Required for anchoring microtubules to the centrosomes and for the integrity of the microtubule network. Recruits PPARA to discrete subcellular compartments and thereby modulates PPARA activity. Required for ciliation. The polypeptide is Centrosome-associated protein 350 (Mus musculus (Mouse)).